The primary structure comprises 361 residues: Phospho-N-acetylmuramoyl-pentapeptide-transferase (361 aa).

Helical transmembrane passes span 28 to 48 (LAII…IEFL), 74 to 94 (TMGG…LADL), 99 to 119 (IWIT…DDYA), 133 to 153 (SKLL…EYLD), 168 to 188 (LSLD…VGSS), 203 to 223 (VPIA…GNLI), 236 to 256 (TGEL…FLWF), 263 to 283 (VFMG…ISVI), 288 to 308 (IVLA…ILQV), and 338 to 358 (KVVI…LSSL).

The protein belongs to the glycosyltransferase 4 family. MraY subfamily. It depends on Mg(2+) as a cofactor.

It is found in the cell inner membrane. It catalyses the reaction UDP-N-acetyl-alpha-D-muramoyl-L-alanyl-gamma-D-glutamyl-meso-2,6-diaminopimeloyl-D-alanyl-D-alanine + di-trans,octa-cis-undecaprenyl phosphate = di-trans,octa-cis-undecaprenyl diphospho-N-acetyl-alpha-D-muramoyl-L-alanyl-D-glutamyl-meso-2,6-diaminopimeloyl-D-alanyl-D-alanine + UMP. The protein operates within cell wall biogenesis; peptidoglycan biosynthesis. Functionally, catalyzes the initial step of the lipid cycle reactions in the biosynthesis of the cell wall peptidoglycan: transfers peptidoglycan precursor phospho-MurNAc-pentapeptide from UDP-MurNAc-pentapeptide onto the lipid carrier undecaprenyl phosphate, yielding undecaprenyl-pyrophosphoryl-MurNAc-pentapeptide, known as lipid I. The sequence is that of Phospho-N-acetylmuramoyl-pentapeptide-transferase from Rickettsia africae (strain ESF-5).